The chain runs to 274 residues: tRNA pseudouridine synthase A (274 aa).

The Nucleophile role is filled by Asp-52. A substrate-binding site is contributed by Tyr-110.

It belongs to the tRNA pseudouridine synthase TruA family. In terms of assembly, homodimer.

It carries out the reaction uridine(38/39/40) in tRNA = pseudouridine(38/39/40) in tRNA. In terms of biological role, formation of pseudouridine at positions 38, 39 and 40 in the anticodon stem and loop of transfer RNAs. The sequence is that of tRNA pseudouridine synthase A from Ralstonia nicotianae (strain ATCC BAA-1114 / GMI1000) (Ralstonia solanacearum).